Here is a 256-residue protein sequence, read N- to C-terminus: ATP synthase peripheral stalk subunit b, mitochondrial (256 aa).

A mitochondrion-targeting transit peptide spans 1-42 (MLSRVVLSAAATAASSLKNAAFLGPGVLQATRTFHTGQPHLA). Residue Lys-131 is modified to N6-succinyllysine. 6 positions are modified to N6-acetyllysine: Lys-139, Lys-154, Lys-162, Lys-221, Lys-233, and Lys-244.

It belongs to the eukaryotic ATPase B chain family. In terms of assembly, component of the ATP synthase complex composed at least of ATP5F1A/subunit alpha, ATP5F1B/subunit beta, ATP5MC1/subunit c (homooctomer), MT-ATP6/subunit a, MT-ATP8/subunit 8, ATP5ME/subunit e, ATP5MF/subunit f, ATP5MG/subunit g, ATP5MK/subunit k, ATP5MJ/subunit j, ATP5F1C/subunit gamma, ATP5F1D/subunit delta, ATP5F1E/subunit epsilon, ATP5PF/subunit F6, ATP5PB/subunit b, ATP5PD/subunit d, ATP5PO/subunit OSCP. ATP synthase complex consists of a soluble F(1) head domain (subunits alpha(3) and beta(3)) - the catalytic core - and a membrane F(0) domain - the membrane proton channel (subunits c, a, 8, e, f, g, k and j). These two domains are linked by a central stalk (subunits gamma, delta, and epsilon) rotating inside the F1 region and a stationary peripheral stalk (subunits F6, b, d, and OSCP).

Its subcellular location is the mitochondrion. It is found in the mitochondrion inner membrane. Its function is as follows. Subunit b, of the mitochondrial membrane ATP synthase complex (F(1)F(0) ATP synthase or Complex V) that produces ATP from ADP in the presence of a proton gradient across the membrane which is generated by electron transport complexes of the respiratory chain. ATP synthase complex consist of a soluble F(1) head domain - the catalytic core - and a membrane F(1) domain - the membrane proton channel. These two domains are linked by a central stalk rotating inside the F(1) region and a stationary peripheral stalk. During catalysis, ATP synthesis in the catalytic domain of F(1) is coupled via a rotary mechanism of the central stalk subunits to proton translocation. In vivo, can only synthesize ATP although its ATP hydrolase activity can be activated artificially in vitro. Part of the complex F(0) domain. Part of the complex F(0) domain and the peripheric stalk, which acts as a stator to hold the catalytic alpha(3)beta(3) subcomplex and subunit a/ATP6 static relative to the rotary elements. This is ATP synthase peripheral stalk subunit b, mitochondrial from Pongo abelii (Sumatran orangutan).